We begin with the raw amino-acid sequence, 264 residues long: Thymidylate synthase (264 aa).

Arginine 21 is a binding site for dUMP. Histidine 51 lines the (6R)-5,10-methylene-5,6,7,8-tetrahydrofolate pocket. A dUMP-binding site is contributed by 126-127 (RR). The active-site Nucleophile is the cysteine 146. DUMP is bound by residues 166 to 169 (RSAD), asparagine 177, and 207 to 209 (HIY). Aspartate 169 lines the (6R)-5,10-methylene-5,6,7,8-tetrahydrofolate pocket. Alanine 263 provides a ligand contact to (6R)-5,10-methylene-5,6,7,8-tetrahydrofolate.

Belongs to the thymidylate synthase family. Bacterial-type ThyA subfamily. Homodimer.

The protein localises to the cytoplasm. It carries out the reaction dUMP + (6R)-5,10-methylene-5,6,7,8-tetrahydrofolate = 7,8-dihydrofolate + dTMP. The protein operates within pyrimidine metabolism; dTTP biosynthesis. Functionally, catalyzes the reductive methylation of 2'-deoxyuridine-5'-monophosphate (dUMP) to 2'-deoxythymidine-5'-monophosphate (dTMP) while utilizing 5,10-methylenetetrahydrofolate (mTHF) as the methyl donor and reductant in the reaction, yielding dihydrofolate (DHF) as a by-product. This enzymatic reaction provides an intracellular de novo source of dTMP, an essential precursor for DNA biosynthesis. This is Thymidylate synthase from Bacteroides thetaiotaomicron (strain ATCC 29148 / DSM 2079 / JCM 5827 / CCUG 10774 / NCTC 10582 / VPI-5482 / E50).